The sequence spans 433 residues: Dihydrolipoyllysine-residue acetyltransferase component of pyruvate dehydrogenase complex (433 aa).

A Lipoyl-binding domain is found at 2 to 77; that stretch reads AFEFRLPDIG…VVGDVIVKID (76 aa). K43 carries the N6-lipoyllysine modification. 2 disordered regions span residues 80-134 and 164-204; these read DAEE…PSVR and YLNG…FPET. Composition is skewed to basic and acidic residues over residues 84-103 and 117-126; these read MQFK…KEQE and EKTEVDESKT. A Peripheral subunit-binding (PSBD) domain is found at 128–165; sequence KAMPSVRKYARENGVNIKAVNGSGKNGRITKEDIDAYL. The segment covering 166–185 has biased composition (low complexity); the sequence is NGGSSEEGSNTSAASESTSS. The active site involves H404.

It belongs to the 2-oxoacid dehydrogenase family. As to quaternary structure, forms a 24-polypeptide structural core with octahedral symmetry. (R)-lipoate serves as cofactor.

It catalyses the reaction N(6)-[(R)-dihydrolipoyl]-L-lysyl-[protein] + acetyl-CoA = N(6)-[(R)-S(8)-acetyldihydrolipoyl]-L-lysyl-[protein] + CoA. Its function is as follows. The pyruvate dehydrogenase complex catalyzes the overall conversion of pyruvate to acetyl-CoA and CO(2). It contains multiple copies of three enzymatic components: pyruvate dehydrogenase (E1), dihydrolipoamide acetyltransferase (E2) and lipoamide dehydrogenase (E3). The protein is Dihydrolipoyllysine-residue acetyltransferase component of pyruvate dehydrogenase complex (pdhC) of Staphylococcus epidermidis (strain ATCC 35984 / DSM 28319 / BCRC 17069 / CCUG 31568 / BM 3577 / RP62A).